Consider the following 286-residue polypeptide: Beta-lactamase SHV-2 (286 aa).

The first 21 residues, 1-21, serve as a signal peptide directing secretion; it reads MRYIRLCIISLLATLPLAVHA. Residue S66 is the Acyl-ester intermediate of the active site. A disulfide bond links C73 and C119. E164 serves as the catalytic Proton acceptor. 230–232 lines the substrate pocket; that stretch reads KTG.

This sequence belongs to the class-A beta-lactamase family.

The enzyme catalyses a beta-lactam + H2O = a substituted beta-amino acid. Its function is as follows. This enzyme hydrolyzes cefotaxime, ceftazidime and other broad spectrum cephalosporins. The sequence is that of Beta-lactamase SHV-2 (bla) from Klebsiella pneumoniae.